Consider the following 217-residue polypeptide: GTP cyclohydrolase 1 (217 aa).

Zn(2+) contacts are provided by C109, H112, and C180.

The protein belongs to the GTP cyclohydrolase I family. In terms of assembly, toroid-shaped homodecamer, composed of two pentamers of five dimers.

The catalysed reaction is GTP + H2O = 7,8-dihydroneopterin 3'-triphosphate + formate + H(+). Its pathway is cofactor biosynthesis; 7,8-dihydroneopterin triphosphate biosynthesis; 7,8-dihydroneopterin triphosphate from GTP: step 1/1. This chain is GTP cyclohydrolase 1, found in Vibrio vulnificus (strain CMCP6).